The following is a 421-amino-acid chain: MVYIDNIAAQEVLDSRGNPTVKATVILSDGTVASAIVPSGASTGKREALELRDGDDRFGGKGVLKACENVEVAIADELVGLSPYNQAEIDAIMKELDGTNNYSKLGANAVLGVSMAVARAAAKSLHMPLYRYLGGANGVIVPTPMLNIINGGAHADNDVDLQEYMIMPTGFDSFKEALRASAEIYHTLKKLLAEDGHPTALGDEGGFAPNFKNNEEPIEYILKAIEKAGYKPADEVNIALDAASSEFYKDGKYELKGDNKVLSAEELAEFYADLVAKYPIVSLEDGMAEDDWEGWKILTEKLGDKIQLVGDDLFVTNKTILAEGIEKGIANAILIKPNQIGSVSETMQTVRLAQRNGYNCVMSHRSGESEDAFIADFAVALNTAQIKTGAPARGERTAKYNRLLEIERDLLYPEYIGKELF.

Glutamine 162 contacts (2R)-2-phosphoglycerate. Glutamate 204 functions as the Proton donor in the catalytic mechanism. Mg(2+)-binding residues include aspartate 241, glutamate 284, and aspartate 311. (2R)-2-phosphoglycerate is bound by residues lysine 336, arginine 365, serine 366, and lysine 387. Lysine 336 (proton acceptor) is an active-site residue.

The protein belongs to the enolase family. The cofactor is Mg(2+).

The protein resides in the cytoplasm. Its subcellular location is the secreted. It is found in the cell surface. The catalysed reaction is (2R)-2-phosphoglycerate = phosphoenolpyruvate + H2O. It participates in carbohydrate degradation; glycolysis; pyruvate from D-glyceraldehyde 3-phosphate: step 4/5. Its function is as follows. Catalyzes the reversible conversion of 2-phosphoglycerate (2-PG) into phosphoenolpyruvate (PEP). It is essential for the degradation of carbohydrates via glycolysis. This is Enolase from Nitratiruptor sp. (strain SB155-2).